The chain runs to 547 residues: Chaperonin GroEL 1 (547 aa).

Residues 29–32 (TLGP), 86–90 (DGTTT), glycine 418, 482–484 (NAA), and aspartate 498 contribute to the ATP site.

It belongs to the chaperonin (HSP60) family. Forms a cylinder of 14 subunits composed of two heptameric rings stacked back-to-back. Interacts with the co-chaperonin GroES.

It is found in the cytoplasm. The catalysed reaction is ATP + H2O + a folded polypeptide = ADP + phosphate + an unfolded polypeptide.. Together with its co-chaperonin GroES, plays an essential role in assisting protein folding. The GroEL-GroES system forms a nano-cage that allows encapsulation of the non-native substrate proteins and provides a physical environment optimized to promote and accelerate protein folding. The chain is Chaperonin GroEL 1 from Corynebacterium jeikeium (strain K411).